The sequence spans 917 residues: Probable dipeptidyl-aminopeptidase B (917 aa).

The interval 1-75 is disordered; that stretch reads MTVGRRLNDE…KYRDDVEEDW (75 aa). Over 1 to 93 the chain is Cytoplasmic; the sequence is MTVGRRLNDE…NAKPSQRRTQ (93 aa). Residues 27 to 39 show a composition bias toward low complexity; it reads DSSSTASVSLTLV. Positions 40 to 49 are enriched in polar residues; sequence DGTNHTTAKP. A compositionally biased stretch (basic and acidic residues) spans 57 to 69; sequence VSRDRYADEKYRD. A helical; Signal-anchor for type II membrane protein membrane pass occupies residues 94–114; it reads IVFWLLVALCVGGWAVAFLFF. Residues 115–917 are Vacuolar-facing; that stretch reads VTSPGNTIST…KRVIRRLLHR (803 aa). A compositionally biased stretch (polar residues) spans 124–133; sequence TTPDTGSGSP. Residues 124 to 150 are disordered; the sequence is TTPDTGSGSPDSDVIKPGSPPAGKKIP. Asn206, Asn302, and Asn354 each carry an N-linked (GlcNAc...) asparagine glycan. Ser759 acts as the Charge relay system in catalysis. N-linked (GlcNAc...) asparagine glycosylation occurs at Asn818. Residues Asp836 and His869 each act as charge relay system in the active site.

It belongs to the peptidase S9B family.

It localises to the vacuole membrane. The enzyme catalyses Release of an N-terminal dipeptide, Xaa-Yaa-|-Zaa-, from a polypeptide, preferentially when Yaa is Pro, provided Zaa is neither Pro nor hydroxyproline.. Its function is as follows. Type IV dipeptidyl-peptidase which removes N-terminal dipeptides sequentially from polypeptides having unsubstituted N-termini provided that the penultimate residue is proline. The chain is Probable dipeptidyl-aminopeptidase B (DAPB) from Arthroderma gypseum (strain ATCC MYA-4604 / CBS 118893) (Microsporum gypseum).